Reading from the N-terminus, the 259-residue chain is Imidazole glycerol phosphate synthase subunit HisF (259 aa).

Active-site residues include Asp11 and Asp130.

The protein belongs to the HisA/HisF family. Heterodimer of HisH and HisF.

Its subcellular location is the cytoplasm. It catalyses the reaction 5-[(5-phospho-1-deoxy-D-ribulos-1-ylimino)methylamino]-1-(5-phospho-beta-D-ribosyl)imidazole-4-carboxamide + L-glutamine = D-erythro-1-(imidazol-4-yl)glycerol 3-phosphate + 5-amino-1-(5-phospho-beta-D-ribosyl)imidazole-4-carboxamide + L-glutamate + H(+). The protein operates within amino-acid biosynthesis; L-histidine biosynthesis; L-histidine from 5-phospho-alpha-D-ribose 1-diphosphate: step 5/9. Its function is as follows. IGPS catalyzes the conversion of PRFAR and glutamine to IGP, AICAR and glutamate. The HisF subunit catalyzes the cyclization activity that produces IGP and AICAR from PRFAR using the ammonia provided by the HisH subunit. This is Imidazole glycerol phosphate synthase subunit HisF from Polaromonas sp. (strain JS666 / ATCC BAA-500).